Reading from the N-terminus, the 304-residue chain is MQKFDTKTFQGLILTLQDYWARQGCTIVQPLDMEVGAGTSHPMTCLRALGPEPMAAAYVQPSRRPTDGRYGENPNRLQHYYQFQVVIKPSPDNIQELYLGSLKELGMDPTIHDIRFVEDNWENPTLGAWGLGWEVWLNGMEVTQFTYFQQVGGLECKPVTGEITYGLERLAMYIQGVDSVYDLVWSDGPLGKTTYGDVFHQNEVEQSTYNFEHADVDFLFSCFEQYEKEAQHLLALEKPLPLPAYERILKAAHSFNLLDARKAISVTERQRYILRIRTLTKAVAEAYYASREALGFPMCNKKES.

The protein belongs to the class-II aminoacyl-tRNA synthetase family. In terms of assembly, tetramer of two alpha and two beta subunits.

Its subcellular location is the cytoplasm. It carries out the reaction tRNA(Gly) + glycine + ATP = glycyl-tRNA(Gly) + AMP + diphosphate. The chain is Glycine--tRNA ligase alpha subunit from Pectobacterium carotovorum subsp. carotovorum (strain PC1).